The following is a 444-amino-acid chain: Chitinase-like protein Idgf5 (444 aa).

An N-terminal signal peptide occupies residues 1-26 (MMWIQKNPFLGLLLCSFLAFFQSTYA). In terms of domain architecture, GH18 spans 29-444 (GKLVCFYDAQ…PILRSIKFKL (416 aa)). C33 and C60 form a disulfide bridge. Residues N289 and N311 are each glycosylated (N-linked (GlcNAc...) asparagine). A disulfide bond links C349 and C429.

This sequence belongs to the glycosyl hydrolase 18 family. IDGF subfamily. Post-translationally, glycosylated.

It localises to the secreted. Probably required to stimulate the proliferation, polarization and motility of imaginal disk cells. May act by stabilizing the binding of insulin-like peptides to its receptor through a simultaneous interaction with both molecules to form a multiprotein signaling complex. The polypeptide is Chitinase-like protein Idgf5 (Idgf5) (Drosophila melanogaster (Fruit fly)).